Consider the following 184-residue polypeptide: ATP synthase subunit delta (184 aa).

It belongs to the ATPase delta chain family. F-type ATPases have 2 components, F(1) - the catalytic core - and F(0) - the membrane proton channel. F(1) has five subunits: alpha(3), beta(3), gamma(1), delta(1), epsilon(1). F(0) has three main subunits: a(1), b(2) and c(10-14). The alpha and beta chains form an alternating ring which encloses part of the gamma chain. F(1) is attached to F(0) by a central stalk formed by the gamma and epsilon chains, while a peripheral stalk is formed by the delta and b chains.

Its subcellular location is the cell inner membrane. Its function is as follows. F(1)F(0) ATP synthase produces ATP from ADP in the presence of a proton or sodium gradient. F-type ATPases consist of two structural domains, F(1) containing the extramembraneous catalytic core and F(0) containing the membrane proton channel, linked together by a central stalk and a peripheral stalk. During catalysis, ATP synthesis in the catalytic domain of F(1) is coupled via a rotary mechanism of the central stalk subunits to proton translocation. Functionally, this protein is part of the stalk that links CF(0) to CF(1). It either transmits conformational changes from CF(0) to CF(1) or is implicated in proton conduction. The sequence is that of ATP synthase subunit delta from Phenylobacterium zucineum (strain HLK1).